Consider the following 2599-residue polypeptide: Non-reducing polyketide synthase azaA (2599 aa).

The segment at 95-231 (PNILLSPMVV…AARSISSLQQ (137 aa)) is N-terminal acylcarrier protein transacylase domain (SAT). Catalysis depends on C132, which acts as the Nucleophile; for transacylase activity. H250 (proton donor/acceptor; for transacylase activity) is an active-site residue. Positions 372–790 (PNEIAVIGMS…GSNASMVVAQ (419 aa)) constitute a Ketosynthase family 3 (KS3) domain. Residues C539, H674, and H713 each act as for beta-ketoacyl synthase activity in the active site. The interval 902-1193 (FGGQISNYVG…ITSMASRALG (292 aa)) is malonyl-CoA:ACP transacylase (MAT) domain. An N-terminal hotdog fold region spans residues 1282–1413 (PKTLWSLIEA…GKLAFLSGQD (132 aa)). The PKS/mFAS DH domain occupies 1282–1591 (PKTLWSLIEA…YHKVAKASMS (310 aa)). The segment at 1310-1589 (LVSGHVIANT…INYHKVAKAS (280 aa)) is product template (PT) domain. The active-site Proton acceptor; for dehydratase activity is H1314. Residues 1443–1591 (ADDIIQGRNI…YHKVAKASMS (149 aa)) form a C-terminal hotdog fold region. Residue D1499 is the Proton donor; for dehydratase activity of the active site. The disordered stretch occupies residues 1601–1652 (EAAPSSSTRAHPTSSSSPRLPGPFVPEDKSQNETQTAGTNAVAKKKSEKSAQ). Low complexity predominate over residues 1602-1619 (AAPSSSTRAHPTSSSSPR). The Carrier domain maps to 1653-1727 (QNVLDKTRAL…GLVEYVQSAV (75 aa)). S1687 carries the post-translational modification O-(pantetheine 4'-phosphoryl)serine. Positions 1749-1779 (NLAASPSSSSSSTNLTEDSSLDPTETTTNIS) are disordered. Low complexity predominate over residues 1750-1766 (LAASPSSSSSSTNLTED). Residues 1769–1779 (LDPTETTTNIS) show a composition bias toward polar residues. Residues 1952–2140 (DSLLNKLSYR…VGYGQVDWTD (189 aa)) form a methyltransferase domain region. The NADPH-binding (R) domain stretch occupies residues 2222–2467 (ITGATGSLGV…LCWTPVNDVA (246 aa)).

Pantetheine 4'-phosphate serves as cofactor.

It functions in the pathway secondary metabolite biosynthesis. Functionally, non-reducing polyketide synthase; part of the gene cluster that mediates the biosynthesis of azaphilones, a class of fungal metabolites characterized by a highly oxygenated pyrano-quinone bicyclic core and exhibiting a broad range of bioactivities. In the first step, the non-reducing polyketide synthase azaA forms the hexaketide precursor from successive condensations of five malonyl-CoA units, presumably with a simple acetyl-CoA starter unit. The reactive polyketide chain then undergoes a PT-mediated C2-C7 cyclization to afford the aromatic ring and is eventually released as an aldehyde through the R-domain. The putative ketoreductase azaE is proposed to catalyze the reduction of the terminal ketone resulting in the early culture product FK17-P2a. The monooxygenase azaH was demonstrated to be the only enzyme required to convert FK17-P2a to azanigerone E. AzaH first hydroxylates the benzaldehyde intermediate FK17-P2a at C4, which triggers the formation of the pyran-ring to afford azanigerone E. In parallel, the 2,4-dimethylhexanoyl chain is synthesized by the HR-PKS azaB and is proposed to be transferred to the C4-hydroxyl of azanigerone E by the acyltransferase azaD directly from the ACP domain of azaB. Alternatively, the 2,4-dimethyl-hexanoyl chain may be offloaded from the HR-PKS as a carboxylic acid and converted to an acyl-CoA by azaF. The resulting acyl-CoA molecule could then be taken up as a substrate by AzaD to form azanigerone B. To yield the carboxylic acid substituent in azanigerone A, the hydroxypropyl side chain of azanigerone B would need to undergo a C-C oxidative cleavage catalyzed by cytochrome P450 AzaI. AzaI is proposed to act on a vicinal diol that leads to a C-C bond scission either through an alkoxyradical intermediate or a peroxy complex. In the biosynthesis of azanigerone A, azanigerone B first undergoes hydroxylation at C10, possibly catalyzed by one of the two FAD-dependent monooxygenases encoded in the cluster, azaG or azaL, resulting in the vicinal diol azanigerone C. Oxidative cleavage of azanigerone C by azaI would yield the corresponding aldehyde derivative of azanigerone A. Finally, the dehydrogenase azaJ is proposed to convert the aldehyde functional group into the carboxylic acid, completing the conversion from azanigerone B to azanigerone A. Alternatively, the oxidation of aldehyde to carboxylic acid may be catalyzed by the same P450 enzyme azaI via consecutive oxidation or by endogenous alcohol dehydrogenase. The chain is Non-reducing polyketide synthase azaA from Aspergillus niger (strain ATCC 1015 / CBS 113.46 / FGSC A1144 / LSHB Ac4 / NCTC 3858a / NRRL 328 / USDA 3528.7).